Reading from the N-terminus, the 211-residue chain is Uracil phosphoribosyltransferase (211 aa).

5-phospho-alpha-D-ribose 1-diphosphate-binding positions include arginine 78, arginine 103, and 130–138 (DPMLATGGT). Uracil is bound by residues isoleucine 195 and 200 to 202 (GDA). Aspartate 201 contacts 5-phospho-alpha-D-ribose 1-diphosphate.

The protein belongs to the UPRTase family. The cofactor is Mg(2+).

The catalysed reaction is UMP + diphosphate = 5-phospho-alpha-D-ribose 1-diphosphate + uracil. It functions in the pathway pyrimidine metabolism; UMP biosynthesis via salvage pathway; UMP from uracil: step 1/1. Allosterically activated by GTP. Its function is as follows. Catalyzes the conversion of uracil and 5-phospho-alpha-D-ribose 1-diphosphate (PRPP) to UMP and diphosphate. The chain is Uracil phosphoribosyltransferase from Pseudarthrobacter chlorophenolicus (strain ATCC 700700 / DSM 12829 / CIP 107037 / JCM 12360 / KCTC 9906 / NCIMB 13794 / A6) (Arthrobacter chlorophenolicus).